The primary structure comprises 1091 residues: TATA element modulatory factor (1091 aa).

Disordered regions lie at residues I42–R86 and F100–S280. Residues W57–I81 are compositionally biased toward polar residues. A phosphoserine mark is found at S73, S78, S112, and S136. Composition is skewed to low complexity over residues K111–S122, S131–S142, and S194–T211. Position 213 is a phosphoserine (S213). Residues E217–Q234 show a composition bias toward basic and acidic residues. Low complexity-rich tracts occupy residues V242–S253 and I264–Q273. Residues S324, S326, S329, S334, S340, and S357 each carry the phosphoserine modification. The interaction with Elongin BC complex stretch occupies residues S329–I338. A disordered region spans residues T360–E443. The span at S368–N379 shows a compositional bias: acidic residues. S411 and S540 each carry phosphoserine. 2 coiled-coil regions span residues E443 to R767 and I824 to E894. Phosphoserine occurs at positions 923 and 926. Residue T927 is modified to Phosphothreonine. Residue S931 is modified to Phosphoserine. A coiled-coil region spans residues I984–L1090.

As to quaternary structure, component of the SNF/SWI transcription factor complexes. Interacts with RAB6A. Interacts with TCEB1. Interacts with STAT3 and FER. Interacts with TRNP1; may regulate TRNP1 proteasomal degradation. Phosphorylated by FER.

Its subcellular location is the cytoplasm. It localises to the nucleus. It is found in the golgi apparatus membrane. Functionally, potential coactivator of the androgen receptor. May play critical roles in two RAB6-dependent retrograde transport processes: one from endosomes to the Golgi and the other from the Golgi to the ER. Mediates STAT3 degradation. This is TATA element modulatory factor (Tmf1) from Mus musculus (Mouse).